A 472-amino-acid polypeptide reads, in one-letter code: tRNA(Ile)-lysidine synthase (472 aa).

ATP is bound at residue 25 to 30; that stretch reads SGGPDS.

This sequence belongs to the tRNA(Ile)-lysidine synthase family.

The protein resides in the cytoplasm. It catalyses the reaction cytidine(34) in tRNA(Ile2) + L-lysine + ATP = lysidine(34) in tRNA(Ile2) + AMP + diphosphate + H(+). In terms of biological role, ligates lysine onto the cytidine present at position 34 of the AUA codon-specific tRNA(Ile) that contains the anticodon CAU, in an ATP-dependent manner. Cytidine is converted to lysidine, thus changing the amino acid specificity of the tRNA from methionine to isoleucine. The chain is tRNA(Ile)-lysidine synthase (tilS) from Bacillus subtilis (strain 168).